A 351-amino-acid chain; its full sequence is Glucan endo-1,3-beta-glucosidase (351 aa).

The signal sequence occupies residues 1-32; it reads MALWYLFNKRSLGAAVLILVGLLMCNIQITGA. The residue at position 33 (Q33) is a Pyrrolidone carboxylic acid. Residues N79 and N99 are each glycosylated (N-linked (GlcNAc...) asparagine). E128 acts as the Proton donor in catalysis. N235 carries an N-linked (GlcNAc...) asparagine glycan. E268 functions as the Nucleophile in the catalytic mechanism.

The protein belongs to the glycosyl hydrolase 17 family. Post-translationally, glycosylated. In terms of processing, the N-terminus is blocked.

It localises to the secreted. The protein resides in the extracellular space. The protein localises to the extracellular matrix. It carries out the reaction Hydrolysis of (1-&gt;3)-beta-D-glucosidic linkages in (1-&gt;3)-beta-D-glucans.. Functionally, implicated in the defense of plants against pathogens. This Nicotiana tabacum (Common tobacco) protein is Glucan endo-1,3-beta-glucosidase (SP41B).